A 336-amino-acid polypeptide reads, in one-letter code: Palmitoyltransferase PFA3 (336 aa).

The Cytoplasmic portion of the chain corresponds to 1–6 (MNDRLS). A helical transmembrane segment spans residues 7–29 (LTSLFPRCLTTCLYIWTAYITLT). Over 30-37 (RIHQIPRW) the chain is Vacuolar. A helical transmembrane segment spans residues 38–58 (FLALTIVPTLAVALYTYYKVI). The Cytoplasmic portion of the chain corresponds to 59 to 147 (ARGPGSPLDF…AECTGFRNQK (89 aa)). Residues 104–154 (RVCQVCHVWKPDRCHHCSSCDVCILKMDHHCPWFAECTGFRNQKFFIQFLM) form the DHHC domain. The chain crosses the membrane as a helical span at residues 148-168 (FFIQFLMYTTLYAFLVLIYTC). Residues 169–188 (YELGTWFNSGSFNRELIDFH) lie on the Vacuolar side of the membrane. A helical membrane pass occupies residues 189–209 (LLGVALLAVAVFISVLAFTCF). The Cytoplasmic portion of the chain corresponds to 210-336 (SIYQVCKNQT…RASVEIIDAN (127 aa)).

This sequence belongs to the DHHC palmitoyltransferase family. PFA3 subfamily. Autopalmitoylated.

The protein resides in the vacuole membrane. The catalysed reaction is L-cysteinyl-[protein] + hexadecanoyl-CoA = S-hexadecanoyl-L-cysteinyl-[protein] + CoA. In terms of biological role, palmitoyltransferase specific for VAC8. Palmitoylates VAC8 at one or more of its N-terminal cysteine residues, which is required for its proper membrane localization. This Saccharomyces cerevisiae (strain ATCC 204508 / S288c) (Baker's yeast) protein is Palmitoyltransferase PFA3 (PFA3).